Here is an 850-residue protein sequence, read N- to C-terminus: Mitogen-activated protein kinase kinase kinase 11 (850 aa).

Ser11 carries the post-translational modification Phosphoserine. Residues 18 to 31 show a composition bias toward gly residues; sequence GSGSGGGGGSGGVR. A disordered region spans residues 18 to 37; sequence GSGSGGGGGSGGVRPEGSPK. Position 35 is a phosphoserine (Ser35). The 65-residue stretch at 42-106 folds into the SH3 domain; that stretch reads YANPVWTALF…PSNYVSRGGG (65 aa). A Protein kinase domain is found at 118-380; it reads LRLEEVIGIG…ASILQQLEAL (263 aa). ATP is bound by residues 124-132 and Lys145; that span reads IGIGGFGKV. The active-site Proton acceptor is the Asp242. Residue Thr278 is modified to Phosphothreonine; by autocatalysis. At Ser282 the chain carries Phosphoserine; by autocatalysis and MAP4K1. Ser395 is modified (phosphoserine). Leucine-zipper stretches follow at residues 404–425 and 439–460; these read IQGL…EEEL and LRRR…ELTL. Phosphoserine is present on residues Ser508, Ser525, Ser549, Ser556, and Ser557. The disordered stretch occupies residues 536-850; the sequence is LEPAESGQTW…QAPWAPEAGP (315 aa). The span at 551–563 shows a compositional bias: basic and acidic residues; the sequence is RRLDDSSNGERRA. Low complexity predominate over residues 598–610; it reads SSPLGSPSTPPAL. At Ser655 the chain carries Phosphoserine. The span at 677–693 shows a compositional bias: pro residues; sequence TAPPPAQMASPCPPDLP. A Phosphothreonine modification is found at Thr712. A phosphoserine mark is found at Ser728, Ser731, Ser743, Ser751, Ser761, Ser773, Ser792, Ser796, and Ser818. The segment covering 790–802 has biased composition (pro residues); sequence RPSPLPSPQPAPR. Positions 803–819 are enriched in low complexity; it reads RAPWTLFPDSDPFWDSP.

This sequence belongs to the protein kinase superfamily. STE Ser/Thr protein kinase family. MAP kinase kinase kinase subfamily. As to quaternary structure, homodimer; undergoes dimerization during activation. Interacts with MAP2K4/MKK4. Interacts with MAP2K7/MKK7. Found in a complex with SH3RF1, RAC1, MAP2K7/MKK7, MAPK8IP1/JIP1 and MAPK8/JNK1. It depends on Mg(2+) as a cofactor. Post-translationally, autophosphorylation on serine and threonine residues within the activation loop plays a role in enzyme activation. Thr-278 is likely to be the main autophosphorylation site. Phosphorylation of Ser-556 and Ser-557 is induced by CDC42.

It is found in the cytoplasm. The protein resides in the cytoskeleton. Its subcellular location is the microtubule organizing center. It localises to the centrosome. It catalyses the reaction L-seryl-[protein] + ATP = O-phospho-L-seryl-[protein] + ADP + H(+). It carries out the reaction L-threonyl-[protein] + ATP = O-phospho-L-threonyl-[protein] + ADP + H(+). With respect to regulation, homodimerization via the leucine zipper domains is required for autophosphorylation and subsequent activation. Activates the JUN N-terminal pathway. Required for serum-stimulated cell proliferation and for mitogen and cytokine activation of MAPK14 (p38), MAPK3 (ERK) and MAPK8 (JNK1) through phosphorylation and activation of MAP2K4/MKK4 and MAP2K7/MKK7. Plays a role in mitogen-stimulated phosphorylation and activation of BRAF, but does not phosphorylate BRAF directly. Influences microtubule organization during the cell cycle. The sequence is that of Mitogen-activated protein kinase kinase kinase 11 (Map3k11) from Rattus norvegicus (Rat).